A 695-amino-acid polypeptide reads, in one-letter code: A-kinase anchor protein 17A (695 aa).

Residues 83–112 (VENKSLVKSFLACLDGKTIKLSGFSDILKV) form a PKA-RI and PKA-RII subunit binding domain region. Residue lysine 118 forms a Glycyl lysine isopeptide (Lys-Gly) (interchain with G-Cter in SUMO1); alternate linkage. Lysine 118 participates in a covalent cross-link: Glycyl lysine isopeptide (Lys-Gly) (interchain with G-Cter in SUMO2); alternate. One can recognise an RRM domain in the interval 147–256 (DTIHLEGLPC…KAVACNIKVS (110 aa)). Residues 279 to 337 (QELEQQREEQKRREKEAEERQRAEERKQKELEELERERKREEKLRKREQKQRDRELRRN) form a disordered region. The segment at 425-454 (LGLQRKERELRERLLSILLSKKPDDSHTHD) is PKA-RI-alpha subunit binding domain. A disordered region spans residues 482–695 (TTLHPLGGQP…PSRHRSTWNR (214 aa)). Position 537 is a phosphoserine (serine 537). The span at 567-585 (VSRKDTRSEQDKCNREPSK) shows a compositional bias: basic and acidic residues. 2 stretches are compositionally biased toward basic residues: residues 598-609 (RHKRERSRARRA) and 618-628 (RKERRPHKKHA). Positions 629 to 644 (YKDDSPRRRSTSPDHT) are enriched in basic and acidic residues. Serine 633 bears the Phosphoserine mark. Composition is skewed to basic residues over residues 645-658 (RSRR…HRRE) and 666-695 (SASR…TWNR).

Monomer. Component of the spliceosome. Interacts with ZRANB2 and SFRS1/ASF through its Arg/Ser-rich domain. Interacts with RI and RII subunits of PKA. As to expression, widely expressed. Found in heart, brain, lung, liver, skeletal muscle, kidney and pancreas. Expressed in activated B-cells and placenta. Expressed in all cell lines tested including Jurkat-TAg, U-937 and HEK293 cells.

Its subcellular location is the nucleus speckle. Splice factor regulating alternative splice site selection for certain mRNA precursors. Mediates regulation of pre-mRNA splicing in a PKA-dependent manner. The sequence is that of A-kinase anchor protein 17A (AKAP17A) from Homo sapiens (Human).